We begin with the raw amino-acid sequence, 270 residues long: UPF0354 protein BPUM_2629 (270 aa).

Belongs to the UPF0354 family.

The sequence is that of UPF0354 protein BPUM_2629 from Bacillus pumilus (strain SAFR-032).